The chain runs to 5588 residues: Histone-lysine N-methyltransferase 2D (5588 aa).

The disordered stretch occupies residues 1–61 (MDSQKPPAED…QKPPHDCSRG (61 aa)). The C2HC pre-PHD-type 1; degenerate zinc-finger motif lies at 104 to 149 (GPCEAVLPKEDASQIGFPEGLTPAHLGEPGGHCWAHHWCAAWSAGV). PHD-type zinc fingers lie at residues 170–218 (QRCS…PEHS) and 270–323 (CPEC…CRLC). The PHD-type 2; degenerate zinc finger occupies 226–276 (EARCAVCEGPGQLCDLLFCTSCGHHYHGACLDTALTARKRASWQCPECKVC). The RING-type 1; atypical zinc finger occupies 229–274 (CAVCEGPGQLCDLLFCTSCGHHYHGACLDTALTARKRASWQCPECK). An RING-type 2; degenerate zinc finger spans residues 276-321 (CQSCRKPGNDSKMLVCETCDKGYHTFCLKPPMEDLPAHSWKCKTCR). Disordered stretches follow at residues 438 to 908 (MPLL…SPII) and 922 to 1315 (LEYP…DDDT). The 15 X 5 AA repeats of S/P-P-P-E/P-E/A stretch occupies residues 439-642 (PLLPPPEESP…VSRLSPPPEE (204 aa)). Residues 440 to 463 (LLPPPEESPLSPPPEESPTSPPPE) are compositionally biased toward pro residues. 4 tandem repeats follow at residues 442–446 (PPPEE), 460–464 (PPPEA), 469–473 (PPTEE), and 477–481 (SPPPE). Residues 464–475 (ASRLSPPTEESP) are compositionally biased toward low complexity. Pro residues-rich tracts occupy residues 490–512 (GCPP…PLSP) and 519–560 (LSPP…PPPE). 4 repeat units span residues 520–524 (SPPPE), 529–533 (SPPPE), 538–542 (SPPPE), and 547–551 (SPPPE). Residues 561–572 (ASRLFPPFEESP) show a composition bias toward low complexity. Over residues 573–614 (LSPPPEDSPLSPPPEASRLSPPPEDSPMSPPPEDSPMSPPPE) the composition is skewed to pro residues. 4 tandem repeats follow at residues 574-578 (SPPPE), 583-587 (SPPPE), 592-596 (SPPPE), and 610-614 (SPPPE). Residues 619–636 (LPLPVLSHLSPLPEVSRL) are compositionally biased toward low complexity. Residues 637-641 (SPPPE) form repeat 15. A compositionally biased stretch (pro residues) spans 637–677 (SPPPEESPLSPPPEDSPASPPPEASRLSPPPEDSPASPPPE). Residues 696 to 712 (DSLVSLPMEESPLSPLP) are compositionally biased toward low complexity. Ser727 carries the post-translational modification Phosphoserine. Composition is skewed to low complexity over residues 735–755 (LCPQ…CLSP), 836–851 (PSQS…FSPS), and 876–893 (LPEE…LSPQ). Composition is skewed to pro residues over residues 894–908 (LMPP…SPII), 959–973 (EPVP…PGSP), and 985–1012 (LPPP…PPAL). Over residues 1013-1023 (PLSVPSPLSPV) the composition is skewed to low complexity. Positions 1033–1045 (AELHEMETDKGPE) are enriched in basic and acidic residues. 3 PHD-type zinc fingers span residues 1071 to 1124 (PSPA…PMEV), 1121 to 1171 (PMEV…SQGD), and 1198 to 1253 (LGVS…SPAR). Ser1107 carries the post-translational modification Phosphoserine. The segment covering 1163 to 1172 (EISNLSQGDA) has biased composition (polar residues). The segment at 1201-1251 (STDVSPARDEGSLRLCTDSLPETDDSLLCDTGTATSGGKAEGDKGRRRSSP) adopts an RING-type 3; atypical zinc-finger fold. Ser1205 bears the Phosphoserine mark. Phosphothreonine is present on Thr1223. Residue Ser1226 is modified to Phosphoserine. Basic residues predominate over residues 1245–1258 (GRRRSSPARSRIKQ). Ser1562 is subject to Phosphoserine. Disordered stretches follow at residues 1566-1721 (KRRQ…SKLE), 1751-1846 (GRPG…MESK), 1886-1962 (GLAL…SLQR), and 2095-2641 (SADG…QRQR). Residues 1593 to 1608 (PDDKKDGDLDTDDLLK) are compositionally biased toward basic and acidic residues. At Ser1627 the chain carries Phosphoserine. Basic and acidic residues predominate over residues 1631-1641 (ELGKEETEESK). Basic residues-rich tracts occupy residues 1658 to 1668 (RQRKSHTRVKR) and 1709 to 1718 (KQQRRARKKS). The span at 1762-1782 (PRADGGSDRKELMTAMHKGDD) shows a compositional bias: basic and acidic residues. Ser1791 bears the Phosphoserine mark. Thr1822 bears the Phosphothreonine mark. Positions 1831 to 1846 (DLDRIPTEELPKMESK) are enriched in basic and acidic residues. Composition is skewed to low complexity over residues 1886-1896 (GLALGSLPSSS) and 1936-1947 (TTPSTPTTPTTE). Over residues 2151-2166 (PTYPPYPSPTGAPAQP) the composition is skewed to pro residues. Residues 2170 to 2181 (GTTTRPGTGQPG) show a composition bias toward low complexity. Residue Ser2196 is modified to Phosphoserine. At Thr2197 the chain carries Phosphothreonine. Lys2203 is modified (N6-acetyllysine). Ser2217 and Ser2231 each carry phosphoserine. Positions 2237–2249 (ESRKSLEVKKEEL) are enriched in basic and acidic residues. Ser2266, Ser2268, and Ser2299 each carry phosphoserine. Pro residues-rich tracts occupy residues 2308-2322 (EPPP…PPSH) and 2331-2359 (YPDP…PPRS). Residues 2366–2388 (SRVPASPQSQSSSQSPLTPRPLS) are compositionally biased toward low complexity. Residues 2470-2486 (GQPTNFARSPGTGTFVG) are compositionally biased toward polar residues. Position 2492 is an asymmetric dimethylarginine (Arg2492). Pro residues predominate over residues 2504 to 2514 (LKPPVPQPGLP). Positions 2546-2557 (PSGSPLGPNSGP) are enriched in low complexity. Residue Ser2597 is modified to Phosphoserine. The segment covering 2610–2622 (SSSSLATPELSSA) has biased composition (low complexity). Positions 2627–2665 (ISSLSQTELEKQRQRQRLRELLIRQQIQRNTLRQEKETA) form a coiled coil. The short motif at 2644–2648 (LRELL) is the LXXLL motif 1 element. Residues 2655–2806 (RNTLRQEKET…QLWQQQQQQQ (152 aa)) are disordered. Residues 2665 to 2680 (AAAAAGAVGPPGNWGA) are compositionally biased toward low complexity. Polar residues-rich tracts occupy residues 2691 to 2704 (SRGQ…QDRS) and 2739 to 2748 (PSSMDMNSRQ). The stretch at 2768-2813 (LQQQQQQQQQQQQQQQQQQQQQQQQQQQQQLWQQQQQQQQQQQQQA) forms a coiled coil. A compositionally biased stretch (low complexity) spans 2769–2806 (QQQQQQQQQQQQQQQQQQQQQQQQQQQQQLWQQQQQQQ). Arg2829 is subject to Asymmetric dimethylarginine. The short motif at 3030 to 3034 (LDDLL) is the LXXLL motif 2 element. A disordered region spans residues 3069–3104 (NEKAEREALLRGVEPVSLGPEERPPPAPDNSEPRLT). Position 3071 is an N6-acetyllysine (Lys3071). 2 positions are modified to phosphoserine: Ser3122 and Ser3193. Disordered regions lie at residues 3129–3193 (NTPK…LNPS) and 3271–3326 (QQQQ…QSMV). Low complexity predominate over residues 3271 to 3284 (QQQQQQQQQQQQQQ). Lys3430 is modified (N6-acetyllysine). Disordered regions lie at residues 3460–3496 (SGGS…TFAQ), 3593–3617 (RNKQ…VLAV), 3633–3661 (LLPA…GGMV), and 3678–3704 (QQQQ…NLAL). Positions 3559-3613 (EKLKLVTEQQSKIQKQLDQVRKQQKEHTNLMAEYRNKQQQQQQQQQQQQQQQHSA) form a coiled coil. Residues 3596 to 3610 (QQQQQQQQQQQQQQQ) show a composition bias toward low complexity. Positions 3712–3747 (RLLQERQLQLQQQRMQLAQKLQQQQQQQQQQQQQQH) form a coiled coil. At Arg3725 the chain carries Asymmetric dimethylarginine. Disordered stretches follow at residues 3760 to 3780 (PGVQ…PSNH) and 3808 to 3827 (LQQQ…QGPH). Coiled coils occupy residues 3854–3883 (RLLT…QQQQ) and 3912–4052 (SLQQ…QVTL). The interval 4053–4249 (GPGLPVKPLQ…QGPPGAGVMP (197 aa)) is disordered. 3 stretches are compositionally biased toward low complexity: residues 4128–4159 (SQLL…PQPQ), 4172–4183 (GQQLGSGSSSES), and 4226–4240 (GSQP…QSGQ). Asymmetric dimethylarginine is present on Arg4255. The residue at position 4272 (Ser4272) is a Phosphoserine. Positions 4279-4283 (LQALL) match the LXXLL motif 3 motif. Positions 4290–4452 (QSQAVRQTPP…SSLVPGHLDQ (163 aa)) are disordered. Residues 4294-4305 (VRQTPPFQEPGT) are compositionally biased toward polar residues. Positions 4307–4322 (PSPLQGLLGCQPQPGG) are enriched in low complexity. The LXXLL motif 4 motif lies at 4310–4314 (LQGLL). The segment covering 4379–4391 (QLPSPSAQLTPTH) has biased composition (polar residues). Phosphoserine is present on Ser4410. Positions 4432–4445 (DNLTEAQKPEQSSL) are enriched in polar residues. The LXXLL motif 5 motif lies at 4514 to 4518 (LQKLL). At Lys4516 the chain carries N6-acetyllysine. Disordered regions lie at residues 4553-4596 (LQGT…EDGV), 4664-4716 (KNNL…EGAL), and 4729-4778 (AALP…QLGS). A compositionally biased stretch (pro residues) spans 4670–4684 (PPTPPSSLPPTPPPS). Ser4789 bears the Phosphoserine mark. Lys4807 participates in a covalent cross-link: Glycyl lysine isopeptide (Lys-Gly) (interchain with G-Cter in SUMO2). Position 4827 is an N6-acetyllysine (Lys4827). Residues 4829-4874 (KGSEVSVMLTVSAAAAKNLNGVMVAVAELLSMKIPNSYEVLFPDGP) form an RING-type 4; degenerate zinc finger. A disordered region spans residues 4877-4908 (AGLEPKKGEAEGPGGKEKGLSGKGPDTGPDWL). The span at 4879 to 4896 (LEPKKGEAEGPGGKEKGL) shows a compositional bias: basic and acidic residues. A Glycyl lysine isopeptide (Lys-Gly) (interchain with G-Cter in SUMO2) cross-link involves residue Lys4931. Positions 4956 to 5031 (QLSAPPPEEP…SEDSRPPRLK (76 aa)) are disordered. The span at 4959-4982 (APPPEEPSPPPSPLAPSPASPPAE) shows a compositional bias: pro residues. Over residues 5017 to 5027 (RPPEESEDSRP) the composition is skewed to basic and acidic residues. Positions 5041–5045 (LRLLL) match the LXXLL motif 6 motif. Residues 5080-5120 (NRRCCFCHEEGDGATDGPARLLNLDLDLWVHLNCALWSTEV) form a C2HC pre-PHD-type 2 zinc finger. The segment at 5141–5188 (TKCSLCQRTGATSSCNRMRCPNVYHFACAIRAKCMFFKDKTMLCPVHK) adopts a PHD-type 7 zinc-finger fold. One can recognise an FYR N-terminal domain in the interval 5226 to 5286 (LHMFRVGGLV…CCYRCSISEN (61 aa)). In terms of domain architecture, FYR C-terminal spans 5287–5372 (NGRPEFVIKV…ESCQNYLFRY (86 aa)). A WDR5 interaction motif (WIN) motif is present at residues 5388–5393 (GCARSE). The region spanning 5448–5564 (NNVYLARSRI…KGEELTYDYQ (117 aa)) is the SET domain. Residues Tyr5502 and 5525–5526 (NH) each bind S-adenosyl-L-methionine. The Zn(2+) site is built by Cys5528, Cys5576, Cys5578, and Cys5583. The region spanning 5572 to 5588 (HKIPCHCGAWNCRKWMN) is the Post-SET domain.

It belongs to the class V-like SAM-binding methyltransferase superfamily. Histone-lysine methyltransferase family. TRX/MLL subfamily. As to quaternary structure, component of the MLL2 complex (also named ASCOM complex), at least composed of catalytic subunit KMT2D/MLL2, ASH2L, RBBP5, WDR5, NCOA6, DPY30, KDM6A, PAXIP1/PTIP, PAGR1 and alpha- and beta-tubulin. Forms a core complex with the evolutionary conserved subcomplex WRAD composed of WDR5, RBBP5, ASH2L/ASH2 and DPY30 subunits; WRAD differentially stimulates the methyltransferase activity. Interacts with ESR1; interaction is direct. Interacts (via WIN motif) with WDR5.

It localises to the nucleus. The catalysed reaction is L-lysyl(4)-[histone H3] + S-adenosyl-L-methionine = N(6)-methyl-L-lysyl(4)-[histone H3] + S-adenosyl-L-homocysteine + H(+). In terms of biological role, histone methyltransferase that catalyzes methyl group transfer from S-adenosyl-L-methionine to the epsilon-amino group of 'Lys-4' of histone H3 (H3K4). Part of chromatin remodeling machinery predominantly forms H3K4me1 methylation marks at active chromatin sites where transcription and DNA repair take place. Acts as a coactivator for estrogen receptor by being recruited by ESR1, thereby activating transcription. In Mus musculus (Mouse), this protein is Histone-lysine N-methyltransferase 2D (Kmt2d).